Here is a 424-residue protein sequence, read N- to C-terminus: Elongation factor Tu, mitochondrial (424 aa).

Residues 36–234 (KPHVNVGTIG…VLDTKIPLPH (199 aa)) enclose the tr-type G domain. The tract at residues 45 to 52 (GHVDHGKT) is G1. Residue 45–52 (GHVDHGKT) participates in GTP binding. The tract at residues 86–90 (GITIT) is G2. The segment at 107–110 (DCPG) is G3. GTP contacts are provided by residues 107–111 (DCPGH) and 162–165 (NKMD). Residues 162–165 (NKMD) form a G4 region. The segment at 199 to 201 (AAA) is G5.

It belongs to the TRAFAC class translation factor GTPase superfamily. Classic translation factor GTPase family. EF-Tu/EF-1A subfamily.

It is found in the mitochondrion. Its function is as follows. This protein promotes the GTP-dependent binding of aminoacyl-tRNA to the A-site of ribosomes during protein biosynthesis. The polypeptide is Elongation factor Tu, mitochondrial (tufm) (Dictyostelium discoideum (Social amoeba)).